A 299-amino-acid polypeptide reads, in one-letter code: UTP--glucose-1-phosphate uridylyltransferase 1 (299 aa).

The protein belongs to the UDPGP type 2 family.

The enzyme catalyses alpha-D-glucose 1-phosphate + UTP + H(+) = UDP-alpha-D-glucose + diphosphate. It functions in the pathway carbohydrate metabolism; nucleotide-sugar metabolism. The protein is UTP--glucose-1-phosphate uridylyltransferase 1 (hasC1) of Streptococcus pyogenes serotype M6 (strain ATCC BAA-946 / MGAS10394).